The primary structure comprises 396 residues: S-adenosylmethionine synthase (396 aa).

E12 contacts Mg(2+). H18 serves as a coordination point for ATP. A K(+)-binding site is contributed by E46. E59 and Q102 together coordinate L-methionine. Residues D170–K172, S238–F241, D249, R255–K256, A272, K276, and K280 contribute to the ATP site. D249 contributes to the L-methionine binding site. Residue K280 participates in L-methionine binding.

The protein belongs to the AdoMet synthase family. As to quaternary structure, homotetramer. Requires Mn(2+) as cofactor. Mg(2+) is required as a cofactor. It depends on Co(2+) as a cofactor. K(+) serves as cofactor.

It localises to the cytoplasm. It catalyses the reaction L-methionine + ATP + H2O = S-adenosyl-L-methionine + phosphate + diphosphate. It functions in the pathway amino-acid biosynthesis; S-adenosyl-L-methionine biosynthesis; S-adenosyl-L-methionine from L-methionine: step 1/1. Catalyzes the formation of S-adenosylmethionine from methionine and ATP. The reaction comprises two steps that are both catalyzed by the same enzyme: formation of S-adenosylmethionine (AdoMet) and triphosphate, and subsequent hydrolysis of the triphosphate. The chain is S-adenosylmethionine synthase (SAMS) from Triticum aestivum (Wheat).